The sequence spans 97 residues: MSDWFRQAANGCITLTLHIQPGAKKSEFAGLHGDALKIRLAAPPVDGKANEALIRFIADALGLAKSAVHLKSGQTSRRKVLEILGTSTTTIAGLADR.

This sequence belongs to the UPF0235 family.

In Dechloromonas aromatica (strain RCB), this protein is UPF0235 protein Daro_3887.